Reading from the N-terminus, the 398-residue chain is Chorismate synthase (398 aa).

Residues Arg44 and Arg50 each contribute to the NADP(+) site. FMN contacts are provided by residues 133–135 (RAS), 261–262 (QA), Gly306, 321–325 (KPIPT), and Arg347.

This sequence belongs to the chorismate synthase family. As to quaternary structure, homotetramer. FMNH2 is required as a cofactor.

The catalysed reaction is 5-O-(1-carboxyvinyl)-3-phosphoshikimate = chorismate + phosphate. It functions in the pathway metabolic intermediate biosynthesis; chorismate biosynthesis; chorismate from D-erythrose 4-phosphate and phosphoenolpyruvate: step 7/7. Functionally, catalyzes the anti-1,4-elimination of the C-3 phosphate and the C-6 proR hydrogen from 5-enolpyruvylshikimate-3-phosphate (EPSP) to yield chorismate, which is the branch point compound that serves as the starting substrate for the three terminal pathways of aromatic amino acid biosynthesis. This reaction introduces a second double bond into the aromatic ring system. The protein is Chorismate synthase of Aquifex aeolicus (strain VF5).